The sequence spans 88 residues: Small ribosomal subunit protein bS20 (88 aa).

A disordered region spans residues 1–27 (MANTPQAKKRARQNEKARKHNASMRSM). The span at 7–22 (AKKRARQNEKARKHNA) shows a compositional bias: basic residues.

Belongs to the bacterial ribosomal protein bS20 family.

Functionally, binds directly to 16S ribosomal RNA. The sequence is that of Small ribosomal subunit protein bS20 from Cellvibrio japonicus (strain Ueda107) (Pseudomonas fluorescens subsp. cellulosa).